The following is a 151-amino-acid chain: UPF0756 membrane protein Moth_0120 (151 aa).

Transmembrane regions (helical) follow at residues Val-6–Ala-26, Ala-52–Pro-72, Met-75–Thr-95, and Met-111–Val-131.

It belongs to the UPF0756 family.

The protein localises to the cell membrane. This Moorella thermoacetica (strain ATCC 39073 / JCM 9320) protein is UPF0756 membrane protein Moth_0120.